Here is a 267-residue protein sequence, read N- to C-terminus: Cytokinesis defective protein 7 (267 aa).

The tract at residues 244–267 (RNQADQSILPPSGDQQHHRSELHA) is disordered. The segment covering 258–267 (QQHHRSELHA) has biased composition (basic and acidic residues).

In Caenorhabditis elegans, this protein is Cytokinesis defective protein 7.